The primary structure comprises 343 residues: Tetraacyldisaccharide 4'-kinase (343 aa).

Position 65–72 (65–72 (HAGGTGKT)) interacts with ATP.

Belongs to the LpxK family.

The catalysed reaction is a lipid A disaccharide + ATP = a lipid IVA + ADP + H(+). It participates in glycolipid biosynthesis; lipid IV(A) biosynthesis; lipid IV(A) from (3R)-3-hydroxytetradecanoyl-[acyl-carrier-protein] and UDP-N-acetyl-alpha-D-glucosamine: step 6/6. Its function is as follows. Transfers the gamma-phosphate of ATP to the 4'-position of a tetraacyldisaccharide 1-phosphate intermediate (termed DS-1-P) to form tetraacyldisaccharide 1,4'-bis-phosphate (lipid IVA). The chain is Tetraacyldisaccharide 4'-kinase from Neisseria gonorrhoeae (strain ATCC 700825 / FA 1090).